Reading from the N-terminus, the 558-residue chain is SPATS2-like protein (558 aa).

Ala-2 is subject to N-acetylalanine. Residues Gly-63–Gln-79 show a composition bias toward basic residues. Disordered regions lie at residues Gly-63–Ile-134 and Lys-157–Thr-201. The span at Gly-80–Glu-92 shows a compositional bias: basic and acidic residues. Ser-120 carries the phosphoserine modification. Residues Leu-271–Leu-344 adopt a coiled-coil conformation. The segment at Thr-380–Gly-525 is disordered. Polar residues-rich tracts occupy residues Ser-381–Lys-390, Ser-410–Asn-432, and Gln-440–Gly-456. Ser-455 is modified (phosphoserine). The span at His-469–Gly-485 shows a compositional bias: basic residues. Basic and acidic residues predominate over residues His-513–Pro-522.

It belongs to the SPATS2 family.

It localises to the cytoplasm. Its subcellular location is the nucleus. The protein resides in the nucleolus. This is SPATS2-like protein (SPATS2L) from Homo sapiens (Human).